The primary structure comprises 262 residues: ATP synthase subunit a (262 aa).

Helical transmembrane passes span 24–44 (AVHLDTLFFSLVAGVLFLVVF), 85–105 (IAPLALTIFCWVFIMNAIDLV), 129–149 (DISATLGMSICVFGLILFYTV), 194–214 (LFGNMYAGELIFILIAVMYMA), and 228–248 (LVWAIFHILVITLQAFIFMML).

Belongs to the ATPase A chain family. As to quaternary structure, F-type ATPases have 2 components, CF(1) - the catalytic core - and CF(0) - the membrane proton channel. CF(1) has five subunits: alpha(3), beta(3), gamma(1), delta(1), epsilon(1). CF(0) has three main subunits: a(1), b(2) and c(9-12). The alpha and beta chains form an alternating ring which encloses part of the gamma chain. CF(1) is attached to CF(0) by a central stalk formed by the gamma and epsilon chains, while a peripheral stalk is formed by the delta and b chains.

It is found in the cell inner membrane. Key component of the proton channel; it plays a direct role in the translocation of protons across the membrane. The protein is ATP synthase subunit a of Haemophilus ducreyi (strain 35000HP / ATCC 700724).